The following is a 141-amino-acid chain: ATP synthase epsilon chain (141 aa).

This sequence belongs to the ATPase epsilon chain family. As to quaternary structure, F-type ATPases have 2 components, CF(1) - the catalytic core - and CF(0) - the membrane proton channel. CF(1) has five subunits: alpha(3), beta(3), gamma(1), delta(1), epsilon(1). CF(0) has three main subunits: a, b and c.

It is found in the cell membrane. Its function is as follows. Produces ATP from ADP in the presence of a proton gradient across the membrane. In Natranaerobius thermophilus (strain ATCC BAA-1301 / DSM 18059 / JW/NM-WN-LF), this protein is ATP synthase epsilon chain.